A 356-amino-acid polypeptide reads, in one-letter code: Carbohydrate sulfotransferase 10 (356 aa).

Over 1 to 6 (MHHQWL) the chain is Cytoplasmic. Residues 7-27 (LLAACFWVIFMFMVASKFITL) traverse the membrane as a helical; Signal-anchor for type II membrane protein segment. Over 28-356 (TFKDPDGYSA…GYQKPDFLLN (329 aa)) the chain is Lumenal. The N-linked (GlcNAc...) asparagine glycan is linked to N99. 3'-phosphoadenylyl sulfate contacts are provided by residues 127-133 (PKVGNTQ) and 189-197 (RDPFERLIS). N-linked (GlcNAc...) asparagine glycosylation is found at N228 and N316.

This sequence belongs to the sulfotransferase 2 family.

It localises to the golgi apparatus membrane. It carries out the reaction 3-O-{beta-D-GlcA-(1-&gt;[3)-alpha-D-Xyl-(1-&gt;3)-beta-D-GlcA-(1-&gt;](n)-4)-beta-D-Xyl-(1-&gt;4)-Rib-ol-P-Rib-ol-P-3-beta-D-GalNAc-(1-&gt;3)-beta-D-GlcNAc-(1-&gt;4)-O-6-P-alpha-D-Man}-L-Thr-[protein] + 3'-phosphoadenylyl sulfate = 3-O-{O-3-S-beta-D-GlcA-(1-&gt;[3)-alpha-D-Xyl-(1-&gt;3)-beta-D-GlcA-(1-&gt;](n)-4)-beta-D-Xyl-(1-&gt;4)-Rib-ol-P-Rib-ol-P-3-beta-D-GalNAc-(1-&gt;3)-beta-D-GlcNAc-(1-&gt;4)-O-6-P-alpha-D-Man}-L-Thr-[protein] + adenosine 3',5'-bisphosphate + H(+). The catalysed reaction is 17beta-estradiol 3-O-(beta-D-glucuronate) + 3'-phosphoadenylyl sulfate = 17beta-estradiol 3-O-(3-sulfo-beta-D-glucuronate) + adenosine 3',5'-bisphosphate + H(+). The enzyme catalyses 17beta-estradiol 3-O-(beta-D-glucuronate) 17-sulfate + 3'-phosphoadenylyl sulfate = 17beta-estradiol 3-O-(3-sulfo-beta-D-glucuronate) 17-sulfate + adenosine 3',5'-bisphosphate + H(+). It catalyses the reaction 17beta-estradiol 17-O-(beta-D-glucuronate) + 3'-phosphoadenylyl sulfate = 17beta-estradiol 17-O-(3-sulfo-beta-D-glucuronate) + adenosine 3',5'-bisphosphate + H(+). It carries out the reaction 16alpha,17beta-estriol 3-O-(beta-D-glucuronate) + 3'-phosphoadenylyl sulfate = 16alpha,17beta-estriol 3-O-(3-sulfo-beta-D-glucuronate) + adenosine 3',5'-bisphosphate + H(+). The catalysed reaction is 16alpha,17beta-estriol 16-O-(beta-D-glucuronate) + 3'-phosphoadenylyl sulfate = 16alpha,17beta-estriol 16-O-(3-sulfo-beta-D-glucuronate) + adenosine 3',5'-bisphosphate + H(+). The enzyme catalyses 16alpha,17beta-estriol 17-O-(beta-D-glucuronate) + 3'-phosphoadenylyl sulfate = 16alpha,17beta-estriol 17-O-(3-sulfo-beta-D-glucuronate) + adenosine 3',5'-bisphosphate + H(+). It catalyses the reaction estrone 3-O-(beta-D-glucuronate) + 3'-phosphoadenylyl sulfate = estrone 3-O-(3-sulfo-beta-D-glucuronate) + adenosine 3',5'-bisphosphate + H(+). It carries out the reaction 3alpha,20alpha-dihydroxy-5beta-pregnane 3-O-(beta-D-glucuronate) + 3'-phosphoadenylyl sulfate = 3alpha,20alpha-dihydroxy-5beta-pregnane 3-O-(3-sulfo-beta-D-glucuronate) + adenosine 3',5'-bisphosphate + H(+). The catalysed reaction is testosterone 17-O-(beta-D-glucuronate) + 3'-phosphoadenylyl sulfate = testosterone 17-O-(3-sulfo-beta-D-glucuronate) + adenosine 3',5'-bisphosphate + H(+). The enzyme catalyses 3beta-androst-5-en-17-one 3-O-(beta-D-glucuronate) + 3'-phosphoadenylyl sulfate = 3beta-androst-5-en-17-one 3-O-(3-sulfo-beta-D-glucuronate) + adenosine 3',5'-bisphosphate + H(+). It catalyses the reaction 3alpha,17alpha-dihydroxy-5beta-androstane-11-one-17beta-carboxylate 3-O-(beta-D-glucuronate) + 3'-phosphoadenylyl sulfate = 3alpha,17alpha-dihydroxy-5beta-androstane-11-one-17beta-carboxylate 3-O-(3-sulfo-beta-D-glucuronate) + adenosine 3',5'-bisphosphate + H(+). It carries out the reaction 3alpha-hydroxyetiocholan-17-one 3-O-(beta-D-glucuronate) + 3'-phosphoadenylyl sulfate = 3alpha-hydroxyetiocholan-17-one 3-O-(3-sulfo-beta-D-glucuronate) + adenosine 3',5'-bisphosphate + H(+). The protein operates within steroid metabolism. Its pathway is protein modification; carbohydrate sulfation. In terms of biological role, catalyzes the transfer of sulfate from 3'-phosphoadenylyl sulfate (PAPS) to position 3 of terminal glucuronic acid of both protein- and lipid-linked oligosaccharides. Participates in biosynthesis of HNK-1 carbohydrate structure 3-O-sulfo-beta-D-GlcA-(1-&gt;3)-beta-D-Gal-(1-&gt;4)-D-GlcNAc-R, a sulfated glucuronyl-lactosaminyl residue carried by many neural recognition molecules, which is involved in cell interactions during ontogenetic development and in synaptic plasticity in the adult. May be indirectly involved in synapse plasticity of the hippocampus, via its role in HNK-1 biosynthesis. Sulfates terminal glucuronyl residue of the laminin globular (LG)-domain binding epitope on DAG1/alpha-dystroglycan and prevents further polymerization by LARGE1 glycosyltransferase. Likely defines the chain length of LG epitope, conferring binding specificity to extracellular matrix components. Plays a role in down-regulating the steroid hormones. Sulfates glucuronidated estrogens and androgens with an impact in hormone cycle and fertility. Has a preference for glucuronyl moiety at the 3-hydroxyl group of a sterol ring rather than the 17-hydroxyl group, showing high catalytic efficiency for 17beta-estradiol 3-O-(beta-D-glucuronate) and dehydroepiandrosterone 3-O-(beta-D-glucuronate) hormones. The protein is Carbohydrate sulfotransferase 10 of Mus musculus (Mouse).